The following is a 372-amino-acid chain: N-methyl-L-tryptophan oxidase (372 aa).

4-34 (DLIIIGSGSVGAAAGYYATRAGLNVLMTDAH) is an FAD binding site. An S-8alpha-FAD cysteine modification is found at Cys-308.

The protein belongs to the MSOX/MTOX family. MTOX subfamily. In terms of assembly, monomer. FAD is required as a cofactor.

It carries out the reaction N(alpha)-methyl-L-tryptophan + O2 + H2O = L-tryptophan + formaldehyde + H2O2. Its function is as follows. Catalyzes the oxidative demethylation of N-methyl-L-tryptophan. This chain is N-methyl-L-tryptophan oxidase, found in Escherichia coli O17:K52:H18 (strain UMN026 / ExPEC).